The sequence spans 240 residues: tRNA (guanine-N(1)-)-methyltransferase (240 aa).

S-adenosyl-L-methionine is bound by residues Gly112 and 132–137; that span reads LGDFVL.

The protein belongs to the RNA methyltransferase TrmD family. In terms of assembly, homodimer.

It is found in the cytoplasm. The enzyme catalyses guanosine(37) in tRNA + S-adenosyl-L-methionine = N(1)-methylguanosine(37) in tRNA + S-adenosyl-L-homocysteine + H(+). In terms of biological role, specifically methylates guanosine-37 in various tRNAs. This chain is tRNA (guanine-N(1)-)-methyltransferase, found in Cyanothece sp. (strain PCC 7425 / ATCC 29141).